The primary structure comprises 107 residues: C-X-C motif chemokine 2 (107 aa).

The first 34 residues, 1–34 (MARATLSAAPSNPRLLRVALLLLLLVAASRRAAG), serve as a signal peptide directing secretion. Disulfide bonds link Cys43-Cys69 and Cys45-Cys85.

Belongs to the intercrine alpha (chemokine CxC) family. Post-translationally, the N-terminal processed form GRO-beta(5-73) is produced by proteolytic cleavage after secretion from bone marrow stromal cells.

It is found in the secreted. Produced by activated monocytes and neutrophils and expressed at sites of inflammation. Hematoregulatory chemokine, which, in vitro, suppresses hematopoietic progenitor cell proliferation. GRO-beta(5-73) shows a highly enhanced hematopoietic activity. This chain is C-X-C motif chemokine 2 (CXCL2), found in Homo sapiens (Human).